Here is a 527-residue protein sequence, read N- to C-terminus: Matrix metalloproteinase-19 (527 aa).

The N-terminal stretch at 1–18 is a signal peptide; it reads MDWQQLWLAFLLPMTVSG. A propeptide spanning residues 19–98 is cleaved from the precursor; it reads RALGPTEKEA…EDPFNQKSLK (80 aa). The Cysteine switch signature appears at 84-91; the sequence is PRCGLEDP. C86 contributes to the Zn(2+) binding site. N-linked (GlcNAc...) asparagine glycosylation occurs at N109. H213 contacts Zn(2+). The active site involves E214. Residues H217 and H223 each contribute to the Zn(2+) site. Hemopexin repeat units lie at residues 286–333, 334–372, 377–425, and 426–471; these read PNPC…WEGL, PGNL…FPMK, EPNL…FTGV, and PDRP…WMHC. A disulfide bond links C289 and C471. 2 N-linked (GlcNAc...) asparagine glycosylation sites follow: N464 and N479. The segment at 473-500 is disordered; the sequence is SQTPDTNSSTGDVTPSTTDTVLGTTPST. D512 carries GPI-anchor amidated aspartate lipidation. A propeptide spans 513–527 (removed in mature form); it reads SASLSFSANVTLLGA. N-linked (GlcNAc...) asparagine glycosylation occurs at N521.

It belongs to the peptidase M10A family. Zn(2+) serves as cofactor. Requires Ca(2+) as cofactor. Post-translationally, activated by autolytic cleavage after Lys-98. Tyrosine phosphorylated by PKDCC/VLK. Highly expressed in the liver. Expressed in the arterial tunica media of large blood vessels.

It is found in the cell membrane. Its subcellular location is the secreted. The protein localises to the extracellular space. The protein resides in the extracellular matrix. Functionally, endopeptidase that degrades various components of the extracellular matrix, such as aggrecan and cartilage oligomeric matrix protein (comp), during development, haemostasis and pathological conditions (arthritic disease). May also play a role in neovascularization or angiogenesis. Hydrolyzes collagen type IV, laminin, nidogen, nascin-C isoform, fibronectin, and type I gelatin. In Mus musculus (Mouse), this protein is Matrix metalloproteinase-19 (Mmp19).